The following is a 215-amino-acid chain: MEKKNRLILALDVTDRENALRIANEVSDYVDSIKVGYPLVLGEGLSIVKELVEIAPVIADFKVADIPNTDRLICEHVFNAGAAGIITHGFTGRDSLDSCVKVANEFGTDVYVVTEMSHPGGVEFFRPVAEDIASMAVEAGASGVVAPATRPERVKDIRKIIGEELSIISPGVGAQGGSAADVIRAGADWVIVGRSIYNSDSPAEAAKKICDEMNC.

Substrate is bound by residues Asp-12, Lys-34, 60–69 (DFKVADIPNT), Ser-117, 170–180 (PGVGAQGGSAA), Gly-193, and Arg-194. Lys-62 serves as the catalytic Proton donor.

This sequence belongs to the OMP decarboxylase family. Type 1 subfamily. As to quaternary structure, homodimer.

The catalysed reaction is orotidine 5'-phosphate + H(+) = UMP + CO2. The protein operates within pyrimidine metabolism; UMP biosynthesis via de novo pathway; UMP from orotate: step 2/2. Its function is as follows. Catalyzes the decarboxylation of orotidine 5'-monophosphate (OMP) to uridine 5'-monophosphate (UMP). The chain is Orotidine 5'-phosphate decarboxylase from Methanococcoides burtonii (strain DSM 6242 / NBRC 107633 / OCM 468 / ACE-M).